We begin with the raw amino-acid sequence, 466 residues long: Aladin (466 aa).

WD repeat units follow at residues 135–174 (WLNS…TTAT), 179–218 (PSQT…HLGR), 229–269 (PNNL…MQPL), 271–310 (RLGP…TTER), and 378–418 (LVGG…FDLQ).

The protein resides in the nucleus. The protein localises to the nuclear pore complex. It is found in the cytoplasm. It localises to the cytoskeleton. Its subcellular location is the spindle. Its function is as follows. Involved in mitotic spindle assembly. The chain is Aladin from Drosophila melanogaster (Fruit fly).